A 408-amino-acid chain; its full sequence is FAD-dependent monooxygenase nscC (408 aa).

The signal sequence occupies residues 1-20 (MASRLPILIIGAGISGLTTA). Residues E34 and A45 each coordinate FAD. Residues N91 and N103 are each glycosylated (N-linked (GlcNAc...) asparagine). Position 119 (R119) interacts with FAD. N-linked (GlcNAc...) asparagine glycosylation is found at N170 and N231. FAD contacts are provided by D328 and G341.

Belongs to the paxM FAD-dependent monooxygenase family. FAD is required as a cofactor.

It functions in the pathway secondary metabolite biosynthesis. FAD-dependent monooxygenase; part of the gene cluster that mediates the biosynthesis of neosartoricin, a prenylated anthracenone that exhibits T-cell antiproliferative activity, suggestive of a physiological role as an immunosuppressive agent. The non-reducing polyketide synthase nscA probably synthesizes and cyclizes the decaketide backbone. The hydrolase nscB then mediates the product release through hydrolysis followed by spontaneous decarboxylation. The prenyltransferase nscD catalyzes the addition of the dimethylallyl group to the aromatic C5. The FAD-dependent monooxygenase nscC is then responsible for the stereospecific hydroxylation at C2. There is no gene encoding O-acetyltransferase in the nsc gene cluster; thus, the last step of 2-O-acetylation leading to neosartoricin may be catalyzed by an unidentified O-acetyltransferase. In Aspergillus fumigatus (strain ATCC MYA-4609 / CBS 101355 / FGSC A1100 / Af293) (Neosartorya fumigata), this protein is FAD-dependent monooxygenase nscC.